A 266-amino-acid chain; its full sequence is Mitochondrial import inner membrane translocase subunit Tim29 (266 aa).

A mitochondrion-targeting transit peptide spans 1–37; sequence MVTAALKRFWSGGHGEAGGEAGGATTVAVKPGLWTRL. The Mitochondrial matrix portion of the chain corresponds to 38–65; it reads STWAGALLRDYAEACGDAAAAARARPGR. A helical transmembrane segment spans residues 66–83; the sequence is AALYVGLLGGAAACCALA. Residues 84–266 lie on the Mitochondrial intermembrane side of the membrane; sequence PSEAAFEEAL…DSLVQSDVSR (183 aa).

Component of the TIM22 complex, which core is composed of TIMM22, associated with TIMM10 (TIMM10A and/or TIMM10B), TIMM9, AGK and TIMM29. Interacts with TIMM10B; the interaction is direct. Interacts with TOMM40; linking the TIM22 complex to the TOM complex. Interacts with TIMM22 (when oxidized); the interaction is direct.

It is found in the mitochondrion inner membrane. In terms of biological role, component of the TIM22 complex, a complex that mediates the import and insertion of multi-pass transmembrane proteins into the mitochondrial inner membrane. The TIM22 complex forms a twin-pore translocase that uses the membrane potential as the external driving force. Required for the stability of the TIM22 complex and functions in the assembly of the TIMM22 protein into the TIM22 complex. May facilitate cooperation between TIM22 and TOM complexes by interacting with TOMM40. In Mus musculus (Mouse), this protein is Mitochondrial import inner membrane translocase subunit Tim29 (Timm29).